The following is a 134-amino-acid chain: Profilin-3 (134 aa).

Cysteine 13 and cysteine 118 form a disulfide bridge. An Involved in PIP2 interaction motif is present at residues 84-100 (AVIRGKKGSGGITIKKT). Threonine 114 carries the phosphothreonine modification.

It belongs to the profilin family. Occurs in many kinds of cells as a complex with monomeric actin in a 1:1 ratio. In terms of processing, phosphorylated by MAP kinases.

It localises to the cytoplasm. The protein resides in the cytoskeleton. Binds to actin and affects the structure of the cytoskeleton. At high concentrations, profilin prevents the polymerization of actin, whereas it enhances it at low concentrations. This is Profilin-3 from Olea europaea (Common olive).